Consider the following 128-residue polypeptide: Large ribosomal subunit protein bL17 (128 aa).

The protein belongs to the bacterial ribosomal protein bL17 family. Part of the 50S ribosomal subunit. Contacts protein L32.

This chain is Large ribosomal subunit protein bL17, found in Streptococcus suis (strain 98HAH33).